The primary structure comprises 201 residues: Molybdenum cofactor guanylyltransferase (201 aa).

Residues 15–17 (LAG), Lys-28, Asp-74, and Asp-104 each bind GTP. Asp-104 contacts Mg(2+).

It belongs to the MobA family. As to quaternary structure, monomer. Mg(2+) serves as cofactor.

It localises to the cytoplasm. It carries out the reaction Mo-molybdopterin + GTP + H(+) = Mo-molybdopterin guanine dinucleotide + diphosphate. Functionally, transfers a GMP moiety from GTP to Mo-molybdopterin (Mo-MPT) cofactor (Moco or molybdenum cofactor) to form Mo-molybdopterin guanine dinucleotide (Mo-MGD) cofactor. The chain is Molybdenum cofactor guanylyltransferase from Pseudomonas syringae pv. syringae (strain B728a).